A 1648-amino-acid polypeptide reads, in one-letter code: AT-rich interactive domain-containing protein arid-1 (1648 aa).

2 disordered regions span residues 150 to 270 (ISEA…PVIN) and 284 to 307 (RKLE…EEKL). Composition is skewed to acidic residues over residues 166-193 (DDDE…DTEE), 219-228 (TQSEESSADS), and 251-260 (SDEEDQEDLA). Residues 261-270 (TTDSENPVIN) show a composition bias toward polar residues. The 91-residue stretch at 655–745 (AETKDLFVAM…FLESYLAINT (91 aa)) folds into the ARID domain. 3 disordered regions span residues 763–935 (VLPG…KEDT), 1095–1563 (SEKR…KPHD), and 1628–1648 (KTAS…TPRP). Over residues 848 to 860 (SDDVTDVPDDMTD) the composition is skewed to acidic residues. Basic and acidic residues-rich tracts occupy residues 861 to 878 (HEDL…ERKS) and 925 to 935 (SEGRGPRKEDT). Acidic residues-rich tracts occupy residues 1102–1112 (DDDESSDSDTD) and 1145–1154 (GDEEAEEEVK). A compositionally biased stretch (low complexity) spans 1165-1185 (QESPPTTSQGTTTPETAATGG). Over residues 1195–1208 (YPPVPEELVPPPPV) the composition is skewed to pro residues. A compositionally biased stretch (polar residues) spans 1213 to 1251 (FPSTDRFSSGGSSNYPTLSRQGSINSMASPMFSPNSDLS). Basic and acidic residues predominate over residues 1313 to 1326 (RASERSIDSASEHH). Residues 1348 to 1357 (ISTTQPTDTS) are compositionally biased toward polar residues. Low complexity predominate over residues 1377-1392 (ASPTLLTSGPLTLSSS). The span at 1393-1404 (APPPPPASPAPP) shows a compositional bias: pro residues. Low complexity-rich tracts occupy residues 1474-1486 (STTT…PKSI) and 1531-1541 (TPTTMTTSTPT). Residues 1542-1551 (RADSFQTQKN) are compositionally biased toward polar residues.

Its subcellular location is the nucleus. In terms of biological role, DNA-binding protein which modulates activity of several transcription factors. Plays a role in the modulation of endoplasmic reticulum (ER) homeostasis during chemical and pathogen stress, including exposure to the Gram-negative bacterium P.aeruginosa. This chain is AT-rich interactive domain-containing protein arid-1, found in Caenorhabditis elegans.